The primary structure comprises 414 residues: 3-oxo-isoapionate-4-phosphate transcarboxylase/hydrolase (414 aa).

Mg(2+)-binding residues include Lys180, Asp182, and Glu183. Position 180 is an N6-carboxylysine (Lys180).

The protein belongs to the RuBisCO large chain family. Mg(2+) is required as a cofactor.

It carries out the reaction 3-oxoisoapionate 4-phosphate + H2O = (2R)-3-phosphoglycerate + glycolate + H(+). Its pathway is carbohydrate metabolism. In terms of biological role, involved in catabolism of D-apiose. Catalyzes the conversion of 3-oxo-isoapionate 4-phosphate to 3-phosphoglycerate and glycolate. This chain is 3-oxo-isoapionate-4-phosphate transcarboxylase/hydrolase, found in Xanthobacter autotrophicus (strain ATCC BAA-1158 / Py2).